The sequence spans 199 residues: Probable nicotinate-nucleotide adenylyltransferase (199 aa).

Belongs to the NadD family.

The catalysed reaction is nicotinate beta-D-ribonucleotide + ATP + H(+) = deamido-NAD(+) + diphosphate. It participates in cofactor biosynthesis; NAD(+) biosynthesis; deamido-NAD(+) from nicotinate D-ribonucleotide: step 1/1. Catalyzes the reversible adenylation of nicotinate mononucleotide (NaMN) to nicotinic acid adenine dinucleotide (NaAD). This Corynebacterium jeikeium (strain K411) protein is Probable nicotinate-nucleotide adenylyltransferase.